Here is an 87-residue protein sequence, read N- to C-terminus: Large ribosomal subunit protein bL31B (87 aa).

Belongs to the bacterial ribosomal protein bL31 family. Type B subfamily. Part of the 50S ribosomal subunit.

In Ralstonia nicotianae (strain ATCC BAA-1114 / GMI1000) (Ralstonia solanacearum), this protein is Large ribosomal subunit protein bL31B.